Consider the following 311-residue polypeptide: 4-hydroxy-tetrahydrodipicolinate synthase (311 aa).

Thr-49 lines the pyruvate pocket. The active-site Proton donor/acceptor is Tyr-138. The Schiff-base intermediate with substrate role is filled by Lys-166. Ile-207 serves as a coordination point for pyruvate.

Belongs to the DapA family. In terms of assembly, homotetramer; dimer of dimers.

It localises to the cytoplasm. It catalyses the reaction L-aspartate 4-semialdehyde + pyruvate = (2S,4S)-4-hydroxy-2,3,4,5-tetrahydrodipicolinate + H2O + H(+). The protein operates within amino-acid biosynthesis; L-lysine biosynthesis via DAP pathway; (S)-tetrahydrodipicolinate from L-aspartate: step 3/4. Catalyzes the condensation of (S)-aspartate-beta-semialdehyde [(S)-ASA] and pyruvate to 4-hydroxy-tetrahydrodipicolinate (HTPA). This Limosilactobacillus fermentum (strain NBRC 3956 / LMG 18251) (Lactobacillus fermentum) protein is 4-hydroxy-tetrahydrodipicolinate synthase.